Reading from the N-terminus, the 749-residue chain is cGMP-dependent protein kinase egl-4 (749 aa).

A coiled-coil region spans residues Glu30–Ser96. A disordered region spans residues Leu87 to Gly111. 3',5'-cyclic GMP is bound by residues Gly234–Ala237, Arg244–Thr245, Arg349, Gly358–Ala361, Arg368–Thr369, and Tyr403. One can recognise a Protein kinase domain in the interval Val438–Phe698. ATP is bound by residues Leu444–Val452 and Lys468. The Nuclear localization signal motif lies at Lys461–Lys473. Asp562 (proton acceptor) is an active-site residue. One can recognise an AGC-kinase C-terminal domain in the interval Met699–Phe749. Residues Ala723–Phe749 form a disordered region.

This sequence belongs to the protein kinase superfamily. AGC Ser/Thr protein kinase family. cGMP subfamily. Requires Mg(2+) as cofactor. Autophosphorylated.

Its subcellular location is the cytoplasm. It is found in the nucleus. It catalyses the reaction L-seryl-[protein] + ATP = O-phospho-L-seryl-[protein] + ADP + H(+). The enzyme catalyses L-threonyl-[protein] + ATP = O-phospho-L-threonyl-[protein] + ADP + H(+). Its activity is regulated as follows. Binding of cGMP results in enzyme activation. In terms of biological role, promotes chemoreceptor gene expression in response to increased cGMP levels by antagonizing the gene repression functions of the class II HDAC hda-4 and the mef-2 transcription factor. Regulates gene expression via recruitment of a histone deacetylase complex containing hda-2, saeg-1 and saeg-2. Represses body size and lifespan through the dbl-1 and insulin pathways, respectively. May also signal through daf-3 and/or daf-5. Role in egg-laying, dauer formation and motility. Regulates behavioral responses to various chemosensory stimuli in sensory neurons. Required for the initiation of long term adaptation to prolonged odor exposure which results in a decrease in odor seeking behavior. May regulate this process by phosphorylating tax-2, a subunit of cyclic nucleotide-gated channel tax-2/tax-4. In ASH sensory neurons, negatively regulates avoidance behavior to some bitter tastants, such as quinine, probably by phosphorylating rgs-2 and rgs-3 which are 2 regulator of G-protein signaling proteins. In AWB sensory neurons, involved in avoidance behavior to some repellent odors. In ASE left (ASEL) sensory neuron, involved in the sensing of environmental alkalinity downstream of receptor-type guanylate cyclase gcy-14. In sensory neurons, involved in the signaling pathway downstream of insulin, TGF-beta and receptor-type guanylate cyclase responsible for inducing quiescence after food intake. Might play a role in aversive olfactory learning in AWC neurons when an odor is associated with food deprivation, depending on the ins-1/age-1 signal from the AIA to the AWC neurons. Probably by regulating neuronal transmission downstream of lin-3 and receptor lin-23 and phospholipase plc-3 in ALA neurons, involved in the decrease in locomotion during the quiescent state that precedes each larval molt. The polypeptide is cGMP-dependent protein kinase egl-4 (Caenorhabditis briggsae).